We begin with the raw amino-acid sequence, 512 residues long: Ferrochelatase-2, chloroplastic (512 aa).

The disordered stretch occupies residues 1 to 32 (MNCPAMTASPSSSSSSSYSTFRPPPPLLPQLS). The transit peptide at 1–83 (MNCPAMTASP…SNPLNISSSS (83 aa)) directs the protein to the chloroplast. The span at 9–21 (SPSSSSSSSYSTF) shows a compositional bias: low complexity. Residue valine 84 is modified to N-acetylvaline.

It belongs to the ferrochelatase family. Expressed in leaves and flowers.

Its subcellular location is the plastid. It localises to the chloroplast membrane. It is found in the chloroplast thylakoid membrane. It catalyses the reaction heme b + 2 H(+) = protoporphyrin IX + Fe(2+). It participates in porphyrin-containing compound metabolism; protoheme biosynthesis; protoheme from protoporphyrin-IX: step 1/1. Functionally, catalyzes the last step of heme biosynthesis by inserting ferrous iron into protoporphyrin IX to produce protoheme. Produces heme for photosynthetic cytochromes, and for proteins involved in abiotic and biotic stress responses. May play a role in the quality control of individual chloroplasts during photo-oxidative stress through regulation of heme biosynthesis. This is Ferrochelatase-2, chloroplastic from Arabidopsis thaliana (Mouse-ear cress).